Consider the following 370-residue polypeptide: 1-propanol dehydrogenase PduQ (370 aa).

Belongs to the iron-containing alcohol dehydrogenase family. As to quaternary structure, interacts with PduP, probably via the N-terminus of PduQ. Requires Fe cation as cofactor.

It is found in the bacterial microcompartment. The enzyme catalyses 1-propanol + NAD(+) = propanal + NADH + H(+). It functions in the pathway polyol metabolism; 1,2-propanediol degradation. Its activity is regulated as follows. Enzyme is oxygen sensitive. In terms of biological role, an iron-dependent alcohol dehydrogenase required for optimal 1,2-propanediol (1,2-PD) degradation. NAD(+) and NADH are regenerated internally within the bacterial microcompartment (BMC) dedicated to 1,2-PD degradation by the PduP and PduQ enzymes, which reduce NAD(+) and oxidize NADH respectively, although there must also be cofactor transport across the BMC. Its function is as follows. The 1,2-PD-specific bacterial microcompartment (BMC) concentrates low levels of 1,2-PD catabolic enzymes, concentrates volatile reaction intermediates thus enhancing pathway flux and keeps the level of toxic, mutagenic propionaldehyde low. In Salmonella typhimurium (strain LT2 / SGSC1412 / ATCC 700720), this protein is 1-propanol dehydrogenase PduQ.